Reading from the N-terminus, the 394-residue chain is GPI transamidase component GAB1 (394 aa).

The Cytoplasmic segment spans residues 1–135 (MDSTALKVAL…TLLSCISRSS (135 aa)). A helical transmembrane segment spans residues 136–156 (IIFTNFAISSSLYCILAEGNV). The Lumenal portion of the chain corresponds to 157–160 (LLSS). The chain crosses the membrane as a helical span at residues 161–181 (VMISISGYLSVYPILLLIPLL). The Cytoplasmic portion of the chain corresponds to 182–190 (GMLKSWRQR). Residues 191 to 211 (ILSAIVSILSLLILLLFSYSI) traverse the membrane as a helical segment. At 212-224 (LGSQSWSFLTQVY) the chain is on the lumenal side. The chain crosses the membrane as a helical span at residues 225 to 245 (GSIITFEKVFPNLGLWWYFFI). The tract at residues 235–255 (PNLGLWWYFFIEMFDTFIPFF) is may be involved in recognition of long-chain fatty acids in GPI. The Cytoplasmic segment spans residues 246–250 (EMFDT). A helical membrane pass occupies residues 251–271 (FIPFFKAVFNIFIAVFITPFT). The Lumenal portion of the chain corresponds to 272–297 (LRYHKQPFYAFILCIGWIVLTKPYPS). A helical transmembrane segment spans residues 298–318 (LGDAGFFFSFLPFFTPLFGYL). Over 319 to 324 (RYPIIS) the chain is Cytoplasmic. Residues 325 to 345 (ALLFLHAIVLAPIFYHLWVVL) traverse the membrane as a helical segment. Over 346-351 (GSGNSN) the chain is Lumenal. The helical transmembrane segment at 352 to 372 (FFYAISLVYALAIASILVDLN) threads the bilayer. Topologically, residues 373–394 (WAMLRIEYDNGIPNFKLKVTQI) are cytoplasmic.

Belongs to the PIGU family. As to quaternary structure, forms a complex with GPI16, GPI17, GPI8 and GAA1.

Its subcellular location is the endoplasmic reticulum membrane. Its pathway is glycolipid biosynthesis; glycosylphosphatidylinositol-anchor biosynthesis. In terms of biological role, component of the GPI transamidase complex. May be involved in the recognition of either the GPI attachment signal or the lipid portion of GPI. This is GPI transamidase component GAB1 (GAB1) from Saccharomyces cerevisiae (strain ATCC 204508 / S288c) (Baker's yeast).